The sequence spans 88 residues: Sec-independent protein translocase protein TatA (88 aa).

Residues 1–21 (MGSLSPWHWVVLVVVVVLLFG) form a helical membrane-spanning segment. Polar residues predominate over residues 49–71 (ENQAQASALETPMQNPTVVQSQR). Residues 49–88 (ENQAQASALETPMQNPTVVQSQRVVPPWSTEQDHTEARPA) are disordered. Residues 79-88 (EQDHTEARPA) are compositionally biased toward basic and acidic residues.

Belongs to the TatA/E family. As to quaternary structure, the Tat system comprises two distinct complexes: a TatABC complex, containing multiple copies of TatA, TatB and TatC subunits, and a separate TatA complex, containing only TatA subunits. Substrates initially bind to the TatABC complex, which probably triggers association of the separate TatA complex to form the active translocon.

The protein resides in the cell membrane. Part of the twin-arginine translocation (Tat) system that transports large folded proteins containing a characteristic twin-arginine motif in their signal peptide across membranes. TatA could form the protein-conducting channel of the Tat system. The chain is Sec-independent protein translocase protein TatA from Mycobacterium leprae (strain TN).